A 423-amino-acid polypeptide reads, in one-letter code: MAQAVVPAMQCRVGVKAAAGRVWSAGRTRTGRGGASPGFKVMAVSTGSTGVVPRLEQLLNMDTTPYTDKVIAEYIWVGGSGIDIRSKSRTISKPVEDPSELPKWNYDGSSTGQAPGEDSEVILYPQAIFKDPFRGGNNVLVICDTYTPQGEPLPTNKRHRAAQIFSDPKVGEQVPWFGIEQEYTLLQKDVNWPLGWPVGGFPGPQGPYYCAVGADKSFGRDISDAHYKACLYAGINISGTNGEVMPGQWEYQVGPSVGIEAGDHIWISRYILERITEQAGVVLTLDPKPIQGDWNGAGCHTNYSTKTMREDGGFEEIKRAILNLSLRHDLHISAYGEGNERRLTGKHETASIGTFSWGVANRGCSIRVGRDTEAKGKGYLEDRRPASNMDPYIVTGLLAETTILWQPSLEAEALAAKKLALKV.

The N-terminal 51 residues, 1 to 51, are a transit peptide targeting the chloroplast; that stretch reads MAQAVVPAMQCRVGVKAAAGRVWSAGRTRTGRGGASPGFKVMAVSTGSTGV. Positions 70–150 constitute a GS beta-grasp domain; it reads VIAEYIWVGG…VICDTYTPQG (81 aa). The disordered stretch occupies residues 89–115; sequence RTISKPVEDPSELPKWNYDGSSTGQAP. The GS catalytic domain occupies 154-423; that stretch reads PTNKRHRAAQ…LAAKKLALKV (270 aa).

This sequence belongs to the glutamine synthetase family. As to quaternary structure, homooctamer.

The protein localises to the plastid. It localises to the chloroplast. The catalysed reaction is L-glutamate + NH4(+) + ATP = L-glutamine + ADP + phosphate + H(+). In terms of biological role, the light-modulated chloroplast enzyme, encoded by a nuclear gene and expressed primarily in leaves, is responsible for the reassimilation of the ammonia generated by photorespiration. In Zea mays (Maize), this protein is Glutamine synthetase, chloroplastic (GLN2).